The chain runs to 355 residues: 3'-5' exonuclease (355 aa).

The disordered stretch occupies residues 1 to 119; sequence MDKFLIKMPI…TPSPEKVKPE (119 aa). Basic and acidic residues-rich tracts occupy residues 13–29 and 71–91; these read KNNE…KETP and KNLD…ENPP. A phosphoserine mark is found at Ser104 and Ser112. A 3'-5' exonuclease domain is found at 154–315; the sequence is TDVDVVPMAF…GQVIYRDLEQ (162 aa). 3 residues coordinate Mg(2+): Asp164, Glu166, and Asp302.

The protein belongs to the WRNexo family.

It is found in the nucleus. In terms of biological role, has exonuclease activity on both single-stranded and duplex templates bearing overhangs, but not blunt ended duplex DNA, and cleaves in a 3'-5' direction. Essential for the formation of DNA replication focal centers. Has an important role in maintaining genome stability. The protein is 3'-5' exonuclease of Drosophila persimilis (Fruit fly).